The sequence spans 76 residues: Probable small nuclear ribonucleoprotein G (76 aa).

The Sm domain maps to 4-76 (AHPPEVKKYM…IVMVEALDRV (73 aa)).

Belongs to the snRNP Sm proteins family. As to quaternary structure, interacts with the SMN complex. Core component of the spliceosomal U1, U2, U4 and U5 small nuclear ribonucleoproteins (snRNPs), the building blocks of the spliceosome. Most spliceosomal snRNPs contain a common set of Sm proteins, SNRPB, SNRPD1, SNRPD2, SNRPD3, SNRPE, SNRPF and SNRPG that assemble in a heptameric protein ring on the Sm site of the small nuclear RNA to form the core snRNP. Component of the U1 snRNP. Component of the U4/U6-U5 tri-snRNP complex. Component of the U7 snRNP complex. Component of the U11/U12 snRNPs that are part of the U12-type spliceosome.

Its subcellular location is the cytoplasm. It localises to the cytosol. It is found in the nucleus. Its function is as follows. Plays a role in pre-mRNA splicing as a core component of the spliceosomal U1, U2, U4 and U5 small nuclear ribonucleoproteins (snRNPs), the building blocks of the spliceosome. Component of both the pre-catalytic spliceosome B complex and activated spliceosome C complexes. Is also a component of the minor U12 spliceosome. In Drosophila melanogaster (Fruit fly), this protein is Probable small nuclear ribonucleoprotein G.